A 283-amino-acid polypeptide reads, in one-letter code: Interferon alpha-inducible protein 27-like protein 2B (283 aa).

A mitochondrion-targeting transit peptide spans 1–90; sequence MKRKFVGAAI…AVGTATGARA (90 aa). Residues 90-120 form a disordered region; that stretch reads AEGSMGASREQESGPQDPPQELQEPQEPPSC. Transmembrane regions (helical) follow at residues 130–150, 176–196, and 202–222; these read FVGA…ALSA, GGGI…ILGL, and IILG…MGAC. Positions 227–283 are disordered; the sequence is PGLQDLQQEPKEPQEPQELQKQQEPQEPQELQKQQETQETQETQELQKTQEPPSYEK. The span at 242–283 shows a compositional bias: low complexity; the sequence is PQELQKQQEPQEPQELQKQQETQETQETQELQKTQEPPSYEK.

This sequence belongs to the IFI6/IFI27 family. In terms of assembly, homooligomer. Interacts with BAK1. Interacts with BAX. Interacts with adenine nucleotide translocase.

It is found in the mitochondrion inner membrane. Functionally, functions in the intrinsic apoptotic signaling pathway and may have an interferon-induced antiviral activity. The protein is Interferon alpha-inducible protein 27-like protein 2B of Mus musculus (Mouse).